Consider the following 425-residue polypeptide: Sucrose-phosphatase 1 (425 aa).

It belongs to the sucrose phosphatase family. Homodimer. It depends on Mg(2+) as a cofactor.

The enzyme catalyses sucrose 6(F)-phosphate + H2O = sucrose + phosphate. It functions in the pathway glycan biosynthesis; sucrose biosynthesis; sucrose from D-fructose 6-phosphate and UDP-alpha-D-glucose: step 2/2. Its activity is regulated as follows. Inhibited by EDTA. Functionally, catalyzes the final step of sucrose synthesis. In Nicotiana tabacum (Common tobacco), this protein is Sucrose-phosphatase 1 (SPP1).